A 386-amino-acid polypeptide reads, in one-letter code: Protein phosphatase methylesterase 1 (386 aa).

A disordered region spans residues 20–48 (ILEKLKGGQEPNSNEEGSDSIGDLPSLKN). Catalysis depends on residues serine 194, aspartate 222, and histidine 348.

The protein belongs to the AB hydrolase superfamily.

It carries out the reaction [phosphatase 2A protein]-C-terminal L-leucine methyl ester + H2O = [phosphatase 2A protein]-C-terminal L-leucine + methanol + H(+). Functionally, demethylates proteins that have been reversibly carboxymethylated. Demethylates the phosphatase PP2A catalytic subunit. This is Protein phosphatase methylesterase 1 (PPE1) from Candida glabrata (strain ATCC 2001 / BCRC 20586 / JCM 3761 / NBRC 0622 / NRRL Y-65 / CBS 138) (Yeast).